The primary structure comprises 238 residues: Probable rhamnogalacturonate lyase B (238 aa).

Positions 1-19 (MRLRTSLGVASACASVASA) are cleaved as a signal peptide. N-linked (GlcNAc...) asparagine glycans are attached at residues Asn27, Asn110, and Asn143.

The protein belongs to the polysaccharide lyase 4 family.

The protein resides in the secreted. The enzyme catalyses Endotype eliminative cleavage of L-alpha-rhamnopyranosyl-(1-&gt;4)-alpha-D-galactopyranosyluronic acid bonds of rhamnogalacturonan I domains in ramified hairy regions of pectin leaving L-rhamnopyranose at the reducing end and 4-deoxy-4,5-unsaturated D-galactopyranosyluronic acid at the non-reducing end.. In terms of biological role, pectinolytic enzymes consist of four classes of enzymes: pectin lyase, polygalacturonase, pectin methylesterase and rhamnogalacturonase. Degrades the rhamnogalacturonan I (RG-I) backbone of pectin. This Aspergillus oryzae (strain ATCC 42149 / RIB 40) (Yellow koji mold) protein is Probable rhamnogalacturonate lyase B (rglB).